Reading from the N-terminus, the 273-residue chain is Probable branched-chain-amino-acid aminotransferase (273 aa).

Lys133 bears the N6-(pyridoxal phosphate)lysine mark.

Belongs to the class-IV pyridoxal-phosphate-dependent aminotransferase family. Pyridoxal 5'-phosphate is required as a cofactor.

The enzyme catalyses L-leucine + 2-oxoglutarate = 4-methyl-2-oxopentanoate + L-glutamate. It carries out the reaction L-isoleucine + 2-oxoglutarate = (S)-3-methyl-2-oxopentanoate + L-glutamate. It catalyses the reaction L-valine + 2-oxoglutarate = 3-methyl-2-oxobutanoate + L-glutamate. Its pathway is amino-acid biosynthesis; L-isoleucine biosynthesis; L-isoleucine from 2-oxobutanoate: step 4/4. It participates in amino-acid biosynthesis; L-leucine biosynthesis; L-leucine from 3-methyl-2-oxobutanoate: step 4/4. The protein operates within amino-acid biosynthesis; L-valine biosynthesis; L-valine from pyruvate: step 4/4. Acts on leucine, isoleucine and valine. This Thermotoga maritima (strain ATCC 43589 / DSM 3109 / JCM 10099 / NBRC 100826 / MSB8) protein is Probable branched-chain-amino-acid aminotransferase (ilvE).